The following is a 356-amino-acid chain: Kelch domain-containing protein VC_1773 (356 aa).

4 Kelch repeats span residues 72–125 (KLYV…SLSP), 163–210 (TIFM…HKNN), 288–331 (NLYA…ASNG), and 333–355 (AMYV…SLLM).

In Vibrio cholerae serotype O1 (strain ATCC 39315 / El Tor Inaba N16961), this protein is Kelch domain-containing protein VC_1773.